The following is a 1487-amino-acid chain: Secretory phospholipase A2 receptor (1487 aa).

The N-terminal stretch at 1 to 26 (MVQWLAMLQLLWLQQLLLLGIHQGIA) is a signal peptide. Residues 27–1396 (QDLTHIQEPS…AQPEKGLSHS (1370 aa)) are Extracellular-facing. Positions 42-165 (KGIFIIQSES…SSGGDICEHP (124 aa)) constitute a Ricin B-type lectin domain. Intrachain disulfides connect cysteine 55–cysteine 68, cysteine 93–cysteine 110, cysteine 181–cysteine 207, and cysteine 195–cysteine 222. Asparagine 97 carries N-linked (GlcNAc...) asparagine glycosylation. In terms of domain architecture, Fibronectin type-II spans 176–224 (AHGMPCVFPFQFKGHWHHDCIREGQKEHLLWCATTSRYEEDEKWGFCPD). N-linked (GlcNAc...) asparagine glycosylation is present at asparagine 239. C-type lectin domains lie at 241 to 357 (SSRI…YICK), 387 to 504 (FNRK…YICK), 524 to 643 (HGRF…MSLC), 673 to 797 (GLAS…WICR), 819 to 938 (YQNA…SICK), and 964 to 1095 (FNYK…GFVC). Intrachain disulfides connect cysteine 263–cysteine 356, cysteine 333–cysteine 348, cysteine 408–cysteine 503, cysteine 480–cysteine 495, cysteine 617–cysteine 634, cysteine 699–cysteine 796, cysteine 774–cysteine 788, cysteine 840–cysteine 937, cysteine 914–cysteine 929, and cysteine 1066–cysteine 1086. N-linked (GlcNAc...) asparagine glycosylation occurs at asparagine 928. N-linked (GlcNAc...) asparagine glycosylation is found at asparagine 1107, asparagine 1122, and asparagine 1131. 2 C-type lectin domains span residues 1120-1231 (YGNR…GAIC) and 1256-1377 (FKGN…FICK). Intrachain disulfides connect cysteine 1208–cysteine 1222, cysteine 1279–cysteine 1376, and cysteine 1353–cysteine 1368. Residues 1397-1417 (IVPVTVTLTLIIALGIFMLCF) traverse the membrane as a helical segment. Over 1418-1487 (WIYKQKSDIF…HKGRPICISP (70 aa)) the chain is Cytoplasmic. Residues 1435–1441 (GSYYPTL) carry the Endocytosis signal motif. A compositionally biased stretch (basic and acidic residues) spans 1463–1475 (DEEVRDAPATESK). The disordered stretch occupies residues 1463–1487 (DEEVRDAPATESKRGHKGRPICISP).

As to quaternary structure, interacts with sPLA2-IB/PLA2G1B; this interaction mediates intracellular signaling as well as clearance of extracellular sPLA2-IB/PLA2G1B via endocytotic pathway. Interacts with sPLA2-X/PLA2G10; this interaction mediates sPLA2-X/PLA2G10 clearance and inactivation. The secretory phospholipase A2 receptor form may be produced by the action of metalloproteinases. It contains all extracellular domains and only lacks transmembrane and cytosolic regions. It is however unclear whether this form is produced by proteolytic cleavage as suggested by some experiments reported by PubMed:11830583, or by alternative splicing. Widely expressed. Present in type II alveolar epithelial cells and a subset of splenic lymphocytes. Present at the surface of polymorphonuclear neutrophils (at protein level).

Its subcellular location is the cell membrane. It localises to the secreted. Functionally, receptor for secretory phospholipase A2 (sPLA2). Acts as a receptor for phospholipases sPLA2-IB/PLA2G1B, sPLA2-X/PLA2G10 and, with lower affinity, sPLA2-IIA/PLA2G2A. Also able to bind to snake PA2-like toxins. Although its precise function remains unclear, binding of sPLA2 to its receptor participates in both positive and negative regulation of sPLA2 functions as well as clearance of sPLA2. Binding of sPLA2-IB/PLA2G1B induces various effects depending on the cell type, such as activation of the mitogen-activated protein kinase (MAPK) cascade to induce cell proliferation, the production of lipid mediators, selective release of arachidonic acid in bone marrow-derived mast cells. In neutrophils, binding of sPLA2-IB/PLA2G1B can activate p38 MAPK to stimulate elastase release and cell adhesion. May be involved in responses in pro-inflammatory cytokine productions during endotoxic shock. Also has endocytic properties and rapidly internalizes sPLA2 ligands, which is particularly important for the clearance of extracellular sPLA2s to protect their potent enzymatic activities. The soluble secretory phospholipase A2 receptor form is circulating and acts as a negative regulator of sPLA2 functions by blocking the biological functions of sPLA2-IB/PLA2G1B and sPLA2-X/PLA2G10. In podocytes, binding of sPLA2-IB/PLA2G1B can regulate podocyte survival and glomerular homeostasis. This Mus musculus (Mouse) protein is Secretory phospholipase A2 receptor (Pla2r1).